We begin with the raw amino-acid sequence, 563 residues long: Arginine--tRNA ligase (563 aa).

The 'HIGH' region motif lies at 121–131; the sequence is PNIAKPFSIGH.

The protein belongs to the class-I aminoacyl-tRNA synthetase family. Monomer.

The protein localises to the cytoplasm. The catalysed reaction is tRNA(Arg) + L-arginine + ATP = L-arginyl-tRNA(Arg) + AMP + diphosphate. The sequence is that of Arginine--tRNA ligase from Streptococcus pyogenes serotype M12 (strain MGAS2096).